Consider the following 343-residue polypeptide: Arginine N-succinyltransferase (343 aa).

Position 125 (L125) interacts with succinyl-CoA. H229 functions as the Proton donor in the catalytic mechanism.

This sequence belongs to the arginine N-succinyltransferase family.

The enzyme catalyses succinyl-CoA + L-arginine = N(2)-succinyl-L-arginine + CoA + H(+). The protein operates within amino-acid degradation; L-arginine degradation via AST pathway; L-glutamate and succinate from L-arginine: step 1/5. Catalyzes the transfer of succinyl-CoA to arginine to produce N(2)-succinylarginine. The polypeptide is Arginine N-succinyltransferase (Photorhabdus laumondii subsp. laumondii (strain DSM 15139 / CIP 105565 / TT01) (Photorhabdus luminescens subsp. laumondii)).